Consider the following 185-residue polypeptide: F-box protein At1g61340 (185 aa).

Residues 78–126 (SRELEDLPLDILVRIICGVEHEDLKQLFHVSKTIREATMIAKQSHFAYS) form the F-box domain.

The polypeptide is F-box protein At1g61340 (Arabidopsis thaliana (Mouse-ear cress)).